Reading from the N-terminus, the 512-residue chain is Retinaldehyde dehydrogenase 3 (512 aa).

The tract at residues Met1 to Pro23 is disordered. Ala2 carries the post-translational modification N-acetylalanine. Residues Lys204, Glu207, and Gly257 to Gly262 contribute to the NAD(+) site. The Proton acceptor role is filled by Glu280. Cys314 (nucleophile) is an active-site residue. Gln361 and Glu411 together coordinate NAD(+).

The protein belongs to the aldehyde dehydrogenase family. As to quaternary structure, homotetramer.

It is found in the cytoplasm. The enzyme catalyses all-trans-retinal + NAD(+) + H2O = all-trans-retinoate + NADH + 2 H(+). The catalysed reaction is retinal + NAD(+) + H2O = retinoate + NADH + 2 H(+). It carries out the reaction all-trans-13,14-dihydroretinal + NAD(+) + H2O = all-trans-13,14-dihydroretinoate + NADH + 2 H(+). Its pathway is cofactor metabolism; retinol metabolism. Catalyzes the NAD-dependent oxidation of aldehyde substrates, such as all-trans-retinal and all-trans-13,14-dihydroretinal, to their corresponding carboxylic acids, all-trans-retinoate and all-trans-13,14-dihydroretinoate, respectively. High specificity for all-trans-retinal as substrate, can also accept acetaldehyde as substrate in vitro but with lower affinity. Required for the biosynthesis of normal levels of retinoate in the embryonic ocular and nasal regions; a critical lipid in the embryonic development of the eye and the nasal region. This is Retinaldehyde dehydrogenase 3 (Aldh1a3) from Rattus norvegicus (Rat).